The chain runs to 627 residues: DNA mismatch repair protein MutL (627 aa).

Positions 354–364 (DEKPPEKKVPE) are enriched in basic and acidic residues. The segment at 354–374 (DEKPPEKKVPEKSTAPSYSPM) is disordered.

This sequence belongs to the DNA mismatch repair MutL/HexB family.

In terms of biological role, this protein is involved in the repair of mismatches in DNA. It is required for dam-dependent methyl-directed DNA mismatch repair. May act as a 'molecular matchmaker', a protein that promotes the formation of a stable complex between two or more DNA-binding proteins in an ATP-dependent manner without itself being part of a final effector complex. Overexpression of mutSL partially suppresses the high spontaneous mutation frequency of a ytkD/mutM/mutY triple disruption which lacks the system required to prevent damage by oxidized guanine (8-oxo-dGTP). This suggests that MutSL also functions to repair mismatches due to oxidative stress in both growing and stationary phase cells. The chain is DNA mismatch repair protein MutL from Bacillus subtilis (strain 168).